The chain runs to 323 residues: D-alanine--D-alanine ligase (323 aa).

Positions 121 to 317 (RIWFLTNNIN…FTNLIEEIIK (197 aa)) constitute an ATP-grasp domain. 147–199 (PMKRPYVIKPLAQGSSIGVEVIFAEDDFNFADYDFPYGDQVIIEQYIKGQGRE) is an ATP binding site. 3 residues coordinate Mg(2+): Glu-270, Glu-284, and Asn-286.

Belongs to the D-alanine--D-alanine ligase family. Mg(2+) serves as cofactor. It depends on Mn(2+) as a cofactor.

It is found in the cytoplasm. The catalysed reaction is 2 D-alanine + ATP = D-alanyl-D-alanine + ADP + phosphate + H(+). Its pathway is cell wall biogenesis; peptidoglycan biosynthesis. Cell wall formation. The polypeptide is D-alanine--D-alanine ligase (Rickettsia peacockii (strain Rustic)).